Consider the following 518-residue polypeptide: Delta(14)-sterol reductase erg24B (518 aa).

Asn-36 carries an N-linked (GlcNAc...) asparagine glycan. The next 6 helical transmembrane spans lie at 110-130, 150-170, 182-202, 294-314, 321-341, and 355-375; these read VTMW…FLPG, AFLS…LYGT, YVQV…FVYL, IVLT…MEPA, VIMD…VPFL, and ELGL…YVIF. Residues Lys-382, Arg-386, Leu-409, Trp-414, and 421–422 contribute to the NADP(+) site; that span reads NY. The helical transmembrane segment at 464 to 484 threads the bilayer; that stretch reads SRGWGMIFTYFYMIYFGVLLL. Residues Asp-490, 494–498, and Tyr-505 each bind NADP(+); that span reads CKRKY.

Belongs to the ERG4/ERG24 family.

The protein localises to the endoplasmic reticulum membrane. The protein operates within steroid metabolism; ergosterol biosynthesis. In terms of biological role, delta(14)-sterol reductase; part of the third module of ergosterol biosynthesis pathway that includes the late steps of the pathway. Catalyzes the reduction of the C14=C15 double bond within 4,4,24-trimethyl ergosta-8,14,24(28)-trienolto produce 4,4-dimethylfecosterol. The third module or late pathway involves the ergosterol synthesis itself through consecutive reactions that mainly occur in the endoplasmic reticulum (ER) membrane. Firstly, the squalene synthase erg9 catalyzes the condensation of 2 farnesyl pyrophosphate moieties to form squalene, which is the precursor of all steroids. Squalene synthase is crucial for balancing the incorporation of farnesyl diphosphate (FPP) into sterol and nonsterol isoprene synthesis. Secondly, squalene is converted into lanosterol by the consecutive action of the squalene epoxidase erg1 and the lanosterol synthase erg7. Then, the delta(24)-sterol C-methyltransferase erg6 methylates lanosterol at C-24 to produce eburicol. Eburicol is the substrate of the sterol 14-alpha demethylase encoded by cyp51A and cyp51B, to yield 4,4,24-trimethyl ergosta-8,14,24(28)-trienol. The C-14 reductase erg24 then reduces the C14=C15 double bond which leads to 4,4-dimethylfecosterol. A sequence of further demethylations at C-4, involving the C-4 demethylation complex containing the C-4 methylsterol oxidases erg25A or erg25B, the sterol-4-alpha-carboxylate 3-dehydrogenase erg26 and the 3-keto-steroid reductase erg27, leads to the production of fecosterol via 4-methylfecosterol. The C-8 sterol isomerase erg2 then catalyzes the reaction which results in unsaturation at C-7 in the B ring of sterols and thus converts fecosterol to episterol. The sterol-C5-desaturase erg3B then catalyzes the introduction of a C-5 double bond in the B ring to produce 5-dehydroepisterol. The 2 other sterol-C5-desaturases, erg3A and erg3C, seem to be less important in ergosterol biosynthesis. The C-22 sterol desaturase erg5 further converts 5-dehydroepisterol into ergosta-5,7,22,24(28)-tetraen-3beta-ol by forming the C-22(23) double bond in the sterol side chain. Finally, ergosta-5,7,22,24(28)-tetraen-3beta-ol is substrate of the C-24(28) sterol reductases erg4A and erg4B to produce ergosterol. Possible alternative sterol biosynthetic pathways might exist from fecosterol to ergosterol, depending on the activities of the erg3 isoforms. The polypeptide is Delta(14)-sterol reductase erg24B (Aspergillus fumigatus (strain ATCC MYA-4609 / CBS 101355 / FGSC A1100 / Af293) (Neosartorya fumigata)).